Consider the following 220-residue polypeptide: Guanylate kinase (220 aa).

The region spanning 11 to 190 is the Guanylate kinase-like domain; it reads GVLFVLSSPS…CYGEVMAILR (180 aa). Residue 18-25 coordinates ATP; the sequence is SPSGAGKT.

Belongs to the guanylate kinase family.

The protein localises to the cytoplasm. It carries out the reaction GMP + ATP = GDP + ADP. Essential for recycling GMP and indirectly, cGMP. In Sphingopyxis alaskensis (strain DSM 13593 / LMG 18877 / RB2256) (Sphingomonas alaskensis), this protein is Guanylate kinase.